The sequence spans 125 residues: uncharacterized protein (125 aa).

This is an uncharacterized protein from Escherichia coli (strain K12).